A 628-amino-acid chain; its full sequence is tRNA uridine 5-carboxymethylaminomethyl modification enzyme MnmG (628 aa).

FAD contacts are provided by residues 14 to 19 (GAGHAG), Val126, and Ser181. 273-287 (GPRYCPSIEDKVVRF) contacts NAD(+). Gln370 lines the FAD pocket.

Belongs to the MnmG family. Homodimer. Heterotetramer of two MnmE and two MnmG subunits. It depends on FAD as a cofactor.

Its subcellular location is the cytoplasm. Functionally, NAD-binding protein involved in the addition of a carboxymethylaminomethyl (cmnm) group at the wobble position (U34) of certain tRNAs, forming tRNA-cmnm(5)s(2)U34. In Bacillus subtilis (strain 168), this protein is tRNA uridine 5-carboxymethylaminomethyl modification enzyme MnmG.